We begin with the raw amino-acid sequence, 106 residues long: Large ribosomal subunit protein uL24 (106 aa).

The protein belongs to the universal ribosomal protein uL24 family. As to quaternary structure, part of the 50S ribosomal subunit.

In terms of biological role, one of two assembly initiator proteins, it binds directly to the 5'-end of the 23S rRNA, where it nucleates assembly of the 50S subunit. Functionally, one of the proteins that surrounds the polypeptide exit tunnel on the outside of the subunit. The polypeptide is Large ribosomal subunit protein uL24 (Alkalilimnicola ehrlichii (strain ATCC BAA-1101 / DSM 17681 / MLHE-1)).